Reading from the N-terminus, the 386-residue chain is Delta(7)-sterol 5(6)-desaturase ERG3 (386 aa).

3 consecutive transmembrane segments (helical) span residues 120-140 (LSLF…VAYL), 172-192 (IPVM…GYSF), and 206-226 (AILW…YFLH). One can recognise a Fatty acid hydroxylase domain in the interval 214–337 (FILFTDCGIY…FTTLWDRLGN (124 aa)). The Histidine box-1 signature appears at 226–230 (HRWLH). Positions 239-243 (HKPHH) match the Histidine box-2 motif. Residues 272 to 292 (PLLFPLHKVLYLFLFTFVNFW) traverse the membrane as a helical segment. The Histidine box-3 motif lies at 314–318 (HTVHH).

This sequence belongs to the sterol desaturase family. Fe cation is required as a cofactor.

Its subcellular location is the endoplasmic reticulum membrane. The enzyme catalyses a Delta(7)-sterol + 2 Fe(II)-[cytochrome b5] + O2 + 2 H(+) = a Delta(5),Delta(7)-sterol + 2 Fe(III)-[cytochrome b5] + 2 H2O. It participates in steroid metabolism; ergosterol biosynthesis; ergosterol from zymosterol: step 3/5. Functionally, C-5 sterol desaturase; part of the third module of ergosterol biosynthesis pathway that includes the late steps of the pathwa. ERG3 catalyzes the introduction of a C-5 double bond in the B ring to produce 5-dehydroepisterol. The third module or late pathway involves the ergosterol synthesis itself through consecutive reactions that mainly occur in the endoplasmic reticulum (ER) membrane. Firstly, the squalene synthase ERG9 catalyzes the condensation of 2 farnesyl pyrophosphate moieties to form squalene, which is the precursor of all steroids. Squalene synthase is crucial for balancing the incorporation of farnesyl diphosphate (FPP) into sterol and nonsterol isoprene synthesis. Secondly, the squalene epoxidase ERG1 catalyzes the stereospecific oxidation of squalene to (S)-2,3-epoxysqualene, which is considered to be a rate-limiting enzyme in steroid biosynthesis. Then, the lanosterol synthase ERG7 catalyzes the cyclization of (S)-2,3 oxidosqualene to lanosterol, a reaction that forms the sterol core. In the next steps, lanosterol is transformed to zymosterol through a complex process involving various demethylation, reduction and desaturation reactions. The lanosterol 14-alpha-demethylase ERG11 (also known as CYP51) catalyzes C14-demethylation of lanosterol to produce 4,4'-dimethyl cholesta-8,14,24-triene-3-beta-ol, which is critical for ergosterol biosynthesis. The C-14 reductase ERG24 reduces the C14=C15 double bond of 4,4-dimethyl-cholesta-8,14,24-trienol to produce 4,4-dimethyl-cholesta-8,24-dienol. 4,4-dimethyl-cholesta-8,24-dienol is substrate of the C-4 demethylation complex ERG25-ERG26-ERG27 in which ERG25 catalyzes the three-step monooxygenation required for the demethylation of 4,4-dimethyl and 4alpha-methylsterols, ERG26 catalyzes the oxidative decarboxylation that results in a reduction of the 3-beta-hydroxy group at the C-3 carbon to an oxo group, and ERG27 is responsible for the reduction of the keto group on the C-3. ERG28 has a role as a scaffold to help anchor ERG25, ERG26 and ERG27 to the endoplasmic reticulum and ERG29 regulates the activity of the iron-containing C4-methylsterol oxidase ERG25. Then, the sterol 24-C-methyltransferase ERG6 catalyzes the methyl transfer from S-adenosyl-methionine to the C-24 of zymosterol to form fecosterol. The C-8 sterol isomerase ERG2 catalyzes the reaction which results in unsaturation at C-7 in the B ring of sterols and thus converts fecosterol to episterol. The sterol-C5-desaturase ERG3 then catalyzes the introduction of a C-5 double bond in the B ring to produce 5-dehydroepisterol. The C-22 sterol desaturase ERG5 further converts 5-dehydroepisterol into ergosta-5,7,22,24(28)-tetraen-3beta-ol by forming the C-22(23) double bond in the sterol side chain. Finally, ergosta-5,7,22,24(28)-tetraen-3beta-ol is substrate of the C-24(28) sterol reductase ERG4 to produce ergosterol. This Candida albicans (strain SC5314 / ATCC MYA-2876) (Yeast) protein is Delta(7)-sterol 5(6)-desaturase ERG3.